We begin with the raw amino-acid sequence, 819 residues long: Regulator of G-protein signaling rgs-7 (819 aa).

Acidic residues predominate over residues 1–11; the sequence is MSDEDADEYDD. Disordered regions lie at residues 1–51, 112–135, and 149–259; these read MSDE…EMLW, GDDS…GYGS, and SSTY…HNNE. A compositionally biased stretch (polar residues) spans 32–44; it reads YQDTTESTGPSEA. A compositionally biased stretch (basic and acidic residues) spans 112-124; that stretch reads GDDSSFRSRDRFV. Over residues 149-166 the composition is skewed to low complexity; it reads SSTYSSSSEAHRLSSLRA. The segment covering 173 to 185 has biased composition (polar residues); the sequence is QLTSTTTSFQPLS. Over residues 213–223 the composition is skewed to basic residues; that stretch reads RMYRKNPKYRR. Basic and acidic residues predominate over residues 234–259; the sequence is SRLEESTSQESERAVTPESWMEHNNE. In terms of domain architecture, C2 spans 290 to 429; sequence KHKDIRGIIF…KASQVVGDPF (140 aa). Disordered regions lie at residues 515–594 and 617–640; these read YRST…DDNG and FTFS…EEDK. 3 stretches are compositionally biased toward polar residues: residues 517–533, 559–568, and 617–632; these read STGS…NLLD, PSITTTTSEN, and FTFS…NLRQ. The RGS domain occupies 682–800; the sequence is SFESLLNNKF…LRDRLFLDLL (119 aa).

Interacts with egl-30.

Functionally, inhibits signal transduction by increasing the GTPase activity of G protein alpha subunit egl-30 (G-alpha(q)), thereby driving it into its inactive GDP-bound form. May organize egl-30 into a stable multiprotein signaling complex, and thereby persistently inhibit egl-30 when triggered by calcium or phospholipids. The protein is Regulator of G-protein signaling rgs-7 (rgs-7) of Caenorhabditis elegans.